The following is a 186-amino-acid chain: MISSNDFRTGTTIEIDGQVWRVVEFLHVKPGKGSAFVRTKLKSVRNGNVVEKTFRAGESVQQAVLEKSNLQHTYVESGDYVFMDMTSFEETRLSSDQIGRGSKYLKEGMEVNVIFYKDKVLEVELPISITLKVTETDPGVKGDTASGGTKPAILETGAQVMVPLFISVGEMIKVDTRNDSYLGREN.

The protein belongs to the elongation factor P family.

The protein resides in the cytoplasm. Its pathway is protein biosynthesis; polypeptide chain elongation. Involved in peptide bond synthesis. Stimulates efficient translation and peptide-bond synthesis on native or reconstituted 70S ribosomes in vitro. Probably functions indirectly by altering the affinity of the ribosome for aminoacyl-tRNA, thus increasing their reactivity as acceptors for peptidyl transferase. The sequence is that of Elongation factor P from Prochlorococcus marinus (strain MIT 9515).